A 538-amino-acid chain; its full sequence is Mitochondria-eating protein (538 aa).

Positions 1-273 are interaction with YWHAG/14-3-3 protein gamma; the sequence is MAENLKRLVS…PRSRSCSRSR (273 aa). Position 85 is a phosphoserine (S85). The disordered stretch occupies residues 92 to 137; sequence GKPVDSKVPSLQNTFDRERRKDPSPRDRDMQQLDSNLNSTRSQLNQ. Positions 106–122 are enriched in basic and acidic residues; the sequence is FDRERRKDPSPRDRDMQ. 2 coiled-coil regions span residues 118-186 and 220-256; these read DRDM…ARHR and QRDT…RSSR. Over residues 123-137 the composition is skewed to polar residues; that stretch reads QLDSNLNSTRSQLNQ. Phosphoserine occurs at positions 156 and 159. Disordered stretches follow at residues 174-227 and 247-292; these read LKTL…EVTS and KSAL…NRSK. Basic and acidic residues-rich tracts occupy residues 181–209 and 216–227; these read EDAR…RRCE and RNADQRDTEVTS. Residues 253 to 278 are compositionally biased toward low complexity; it reads RSSRSRSPSPAPRSRSCSRSRSASPS. S285, S287, and S509 each carry phosphoserine.

This sequence belongs to the MIEAP family. In terms of assembly, interacts (via coiled-coil domains) with BNIP3L (via BH3 domain). Interacts (via coiled-coil domains) with BNIP3 (via BH3 domain). Interacts with YWHAG/14-3-3 protein gamma; a protein that also plays a role in MALM.

The protein resides in the cytoplasm. It is found in the cytosol. The protein localises to the mitochondrion outer membrane. Its subcellular location is the mitochondrion matrix. In terms of biological role, key regulator of mitochondrial quality that mediates the repairing or degradation of unhealthy mitochondria in response to mitochondrial damage. Mediator of mitochondrial protein catabolic process (also named MALM) by mediating the degradation of damaged proteins inside mitochondria by promoting the accumulation in the mitochondrial matrix of hydrolases that are characteristic of the lysosomal lumen. Also involved in mitochondrion degradation of damaged mitochondria by promoting the formation of vacuole-like structures (named MIV), which engulf and degrade unhealthy mitochondria by accumulating lysosomes. The physical interaction of SPATA18/MIEAP, BNIP3 and BNIP3L/NIX at the mitochondrial outer membrane regulates the opening of a pore in the mitochondrial double membrane in order to mediate the translocation of lysosomal proteins from the cytoplasm to the mitochondrial matrix. Binds cardiolipin. May form molecular condensates (non-membrane-bounded organelles) within mitochondria that compartmentalize and promote cardiolipin metabolism. This is Mitochondria-eating protein (SPATA18) from Macaca fascicularis (Crab-eating macaque).